The primary structure comprises 144 residues: MPEPARPAPAPVPVHGTLLAFDYGEKRIGVALGNSITRSARALEVIPNRSVEYRFTQITRLVNAWQPVGFVVGMPVHPEGEDQPMIKLAKRFGNQLHGRYGLPVTWVDERYSSIAAQDAGATDDVLDAEAARIILQQFFDESHA.

It belongs to the YqgF nuclease family.

It localises to the cytoplasm. Functionally, could be a nuclease involved in processing of the 5'-end of pre-16S rRNA. This Ralstonia nicotianae (strain ATCC BAA-1114 / GMI1000) (Ralstonia solanacearum) protein is Putative pre-16S rRNA nuclease.